The sequence spans 182 residues: Small ribosomal subunit protein uS4c (182 aa).

The S4 RNA-binding domain occupies 82–143 (MRLDNILFRL…KQRSKALIQN (62 aa)).

It belongs to the universal ribosomal protein uS4 family. In terms of assembly, part of the 30S ribosomal subunit. Contacts protein S5. The interaction surface between S4 and S5 is involved in control of translational fidelity.

It is found in the plastid. The protein localises to the chloroplast. In terms of biological role, one of the primary rRNA binding proteins, it binds directly to 16S rRNA where it nucleates assembly of the body of the 30S subunit. With S5 and S12 plays an important role in translational accuracy. In Isophysis tasmanica, this protein is Small ribosomal subunit protein uS4c (rps4).